A 670-amino-acid polypeptide reads, in one-letter code: Acetolactate synthase, chloroplastic (670 aa).

Low complexity-rich tracts occupy residues 1-48 (MAAA…SSSS) and 55-77 (KSSS…TTPS). Residues 1–55 (MAAATTTTTTSSSISFSTKPSPSSSKSPLPISRFSLPFSLNPNKSSSSSRRRGIK) constitute a chloroplast transit peptide. Residues 1–94 (MAAATTTTTT…ETFISRFAPD (94 aa)) are disordered. E144 provides a ligand contact to thiamine diphosphate. Position 186 (S186) interacts with FAD. Q207 contributes to the thiamine diphosphate binding site. Residues K220 and R246 each coordinate (R)-imazaquin. FAD is bound at residue R246. A chlorimuron-ethyl-binding site is contributed by K256. Residues G308 and 331–332 (TL) contribute to the FAD site. C340 carries the cysteine sulfinic acid (-SO2H) modification. FAD-binding positions include 349–352 (LGMH) and 371–375 (GVRFD). 376 to 377 (DR) contributes to the chlorimuron-ethyl binding site. Residues 395-396 (DI) and 414-415 (DV) each bind FAD. Positions 414–446 (DVKLALQGMNKVLENRAEELKLDFGVWRNELNV) form a coiled coil. 487 to 488 (QH) lines the thiamine diphosphate pocket. Residue 508–509 (GG) participates in FAD binding. Thiamine diphosphate-binding positions include 511-513 (GAM), 538-540 (DGS), and 565-570 (NQHLGM). Residues D538, N565, and H567 each coordinate Mg(2+). W574 and S653 together coordinate chlorimuron-ethyl.

Belongs to the TPP enzyme family. Homodimer or homotetramer. The acetolactate synthase complex contains both large catalytic subunits and small regulatory subunits. Homodimer. The acetolactate synthase complex contains 4 homodimers of the large catalytic subunits, and 1 homotetramer of the small regulatory subunits. It depends on Mg(2+) as a cofactor. FAD serves as cofactor. The cofactor is thiamine diphosphate.

It is found in the plastid. The protein localises to the chloroplast. It carries out the reaction 2 pyruvate + H(+) = (2S)-2-acetolactate + CO2. It functions in the pathway amino-acid biosynthesis; L-isoleucine biosynthesis; L-isoleucine from 2-oxobutanoate: step 1/4. It participates in amino-acid biosynthesis; L-valine biosynthesis; L-valine from pyruvate: step 1/4. Its activity is regulated as follows. Inhibited by asymmetric aryl disulfides, triazolopyrimidine sulfonanilide compounds, isatin derivatives, and sulfonylurea and imidazolinone herbicides. Insensitive to feed-back inhibition by branched-chain amino acids. In terms of biological role, catalyzes the formation of acetolactate from pyruvate, the first step in valine and isoleucine biosynthesis. The polypeptide is Acetolactate synthase, chloroplastic (ALS) (Arabidopsis thaliana (Mouse-ear cress)).